We begin with the raw amino-acid sequence, 365 residues long: Phospho-N-acetylmuramoyl-pentapeptide-transferase (365 aa).

11 helical membrane-spanning segments follow: residues 15-35 (WPAA…DRLI), 39-59 (LLSL…WWGV), 84-104 (GTPT…GGLV), 114-134 (LLAI…DDWS), 156-176 (AAVL…TVSL), 178-198 (FNLD…VFLA), 209-229 (LDGL…LQLM), 235-255 (GDPA…GFLI), 263-283 (VFMG…VALL), 291-311 (LLMG…VWVF), and 343-363 (VVVP…LGLH).

Belongs to the glycosyltransferase 4 family. MraY subfamily. The cofactor is Mg(2+).

It localises to the cell inner membrane. It carries out the reaction UDP-N-acetyl-alpha-D-muramoyl-L-alanyl-gamma-D-glutamyl-meso-2,6-diaminopimeloyl-D-alanyl-D-alanine + di-trans,octa-cis-undecaprenyl phosphate = di-trans,octa-cis-undecaprenyl diphospho-N-acetyl-alpha-D-muramoyl-L-alanyl-D-glutamyl-meso-2,6-diaminopimeloyl-D-alanyl-D-alanine + UMP. Its pathway is cell wall biogenesis; peptidoglycan biosynthesis. In terms of biological role, catalyzes the initial step of the lipid cycle reactions in the biosynthesis of the cell wall peptidoglycan: transfers peptidoglycan precursor phospho-MurNAc-pentapeptide from UDP-MurNAc-pentapeptide onto the lipid carrier undecaprenyl phosphate, yielding undecaprenyl-pyrophosphoryl-MurNAc-pentapeptide, known as lipid I. This chain is Phospho-N-acetylmuramoyl-pentapeptide-transferase, found in Synechococcus sp. (strain WH7803).